Consider the following 458-residue polypeptide: MQRPWAEPYKIKAVEPIRMTTREYREQAIREAGYNTFLLRSEDVYIDLLTDSGTNAMSDRQWGALMMGDEAYAGARSFFRLEEAVREIYGFKYVVPTHQGRGAEHLISRILIKPGDYIPGNMYFTTTRTHQELQGGTFVDVIIDEAHDPQASHPFKGNVDIAKFEALIDRVGADKIPYINVALTVNMAGGQPVSMANLREVRKVCDRHGIRMWSDATRAVENAYFIKEREEGYQDKPVREILKEMMSYFDGCTMSGKKDCLVNIGGFLAMNEEWILQKAREQVVIFEGMPTYGGLAGRDMEAIAQGIYEMVDDDYIAHRIHQVRYLGEQLLEAGIPIVQPIGGHAVFLDARAFLPHIPQDQFPAQALAAALYVDSGVRAMERGIVSAGRNPQTGEHNYPKLELVRLTIPRRVYTDRHMDVVAYSVKHLWKERDTIRGLRMVYEPPTLRFFTARFEPIS.

The residue at position 258 (Lys-258) is an N6-(pyridoxal phosphate)lysine.

The protein belongs to the beta-eliminating lyase family. As to quaternary structure, homotetramer. It depends on pyridoxal 5'-phosphate as a cofactor.

It catalyses the reaction L-tyrosine + H2O = phenol + pyruvate + NH4(+). The sequence is that of Tyrosine phenol-lyase (tpl) from Symbiobacterium thermophilum (strain DSM 24528 / JCM 14929 / IAM 14863 / T).